A 144-amino-acid chain; its full sequence is Cytochrome c oxidase subunit 4 isoform 1, mitochondrial (144 aa).

At 1 to 73 (SVVKSEDFSL…SFAEMNRGSN (73 aa)) the chain is on the mitochondrial matrix side. Residue Lys4 is modified to N6-acetyllysine; alternate. An N6-succinyllysine; alternate modification is found at Lys4. Lys28 is modified (N6-acetyllysine). Phosphoserine is present on residues Ser31 and Ser33. Lys35 is subject to N6-acetyllysine; alternate. N6-succinyllysine; alternate is present on Lys35. At Lys42 the chain carries N6-acetyllysine. The helical transmembrane segment at 74–99 (EWKTVVGGAMFFIGFTALIIMWQKHY) threads the bilayer. Topologically, residues 100-144 (VYGPLPQTFDKEWVGKQTKRMLDMKVNPIQGLASKWDYEKNEWKK) are mitochondrial intermembrane.

The protein belongs to the cytochrome c oxidase IV family. In terms of assembly, component of the cytochrome c oxidase (complex IV, CIV), a multisubunit enzyme composed of 14 subunits. The complex is composed of a catalytic core of 3 subunits MT-CO1, MT-CO2 and MT-CO3, encoded in the mitochondrial DNA, and 11 supernumerary subunits COX4I, COX5A, COX5B, COX6A, COX6B, COX6C, COX7A, COX7B, COX7C, COX8 and NDUFA4, which are encoded in the nuclear genome. The complex exists as a monomer or a dimer and forms supercomplexes (SCs) in the inner mitochondrial membrane with NADH-ubiquinone oxidoreductase (complex I, CI) and ubiquinol-cytochrome c oxidoreductase (cytochrome b-c1 complex, complex III, CIII), resulting in different assemblies (supercomplex SCI(1)III(2)IV(1) and megacomplex MCI(2)III(2)IV(2)). Interacts with PHB2; the interaction decreases in absence of SPHK2. Interacts with AFG1L. Interacts with ABCB7; this interaction allows the regulation of cellular iron homeostasis and cellular reactive oxygen species (ROS) levels in cardiomyocytes. Interacts with FLVCR2; this interaction occurs in the absence of heme and is disrupted upon heme binding. Interacts with IRGC.

The protein resides in the mitochondrion inner membrane. It participates in energy metabolism; oxidative phosphorylation. Component of the cytochrome c oxidase, the last enzyme in the mitochondrial electron transport chain which drives oxidative phosphorylation. The respiratory chain contains 3 multisubunit complexes succinate dehydrogenase (complex II, CII), ubiquinol-cytochrome c oxidoreductase (cytochrome b-c1 complex, complex III, CIII) and cytochrome c oxidase (complex IV, CIV), that cooperate to transfer electrons derived from NADH and succinate to molecular oxygen, creating an electrochemical gradient over the inner membrane that drives transmembrane transport and the ATP synthase. Cytochrome c oxidase is the component of the respiratory chain that catalyzes the reduction of oxygen to water. Electrons originating from reduced cytochrome c in the intermembrane space (IMS) are transferred via the dinuclear copper A center (CU(A)) of subunit 2 and heme A of subunit 1 to the active site in subunit 1, a binuclear center (BNC) formed by heme A3 and copper B (CU(B)). The BNC reduces molecular oxygen to 2 water molecules using 4 electrons from cytochrome c in the IMS and 4 protons from the mitochondrial matrix. The polypeptide is Cytochrome c oxidase subunit 4 isoform 1, mitochondrial (COX4I1) (Hylobates agilis (Agile gibbon)).